We begin with the raw amino-acid sequence, 797 residues long: uncharacterized protein (797 aa).

This is an uncharacterized protein from Treponema pallidum (strain Nichols).